The sequence spans 600 residues: Lamin-B2 (600 aa).

The segment at 2 to 27 is head; sequence SGTPIRGTPGGTPLSPTRISRLQEKE. S16 carries the post-translational modification Phosphoserine; by CDK1. Residues 25–381 form the IF rod domain; that stretch reads EKEELRQLND…KLLEGEEERL (357 aa). Residues 28-64 form a coil 1A region; the sequence is ELRQLNDRLAVYIDRVRALELENDRLLVKISEKEEVT. Residues 75 to 212 form a coil 1B region; it reads YESELADARR…NVFEEEIRET (138 aa). The tract at residues 237–379 is coil 2; it reads QALEDLRNQH…YRKLLEGEEE (143 aa). 2 disordered regions span residues 377–449 and 568–600; these read EEER…QMSQ and ENEEEEDEADFGEEDLFNQQGDPRTTSRGCLVM. Residues 380-600 are tail; sequence RLKLSPSPSS…RTTSRGCLVM (221 aa). Residues 383–410 show a composition bias toward low complexity; sequence LSPSPSSRVTVSRATSSSSSSSTSLVRS. The residue at position 386 (S386) is a Phosphoserine. Positions 414 to 419 match the Nuclear localization signal motif; the sequence is KRRRIE. The LTD domain occupies 445–562; it reads FQMSQQASAT…EEVAVRTVTK (118 aa). The span at 569-583 shows a compositional bias: acidic residues; the sequence is NEEEEDEADFGEEDL. Over residues 584–600 the composition is skewed to polar residues; the sequence is FNQQGDPRTTSRGCLVM. The residue at position 597 (C597) is a Cysteine methyl ester. A lipid anchor (S-farnesyl cysteine) is attached at C597. The propeptide at 598-600 is removed in mature form; the sequence is LVM.

This sequence belongs to the intermediate filament family. As to quaternary structure, homodimer. Lamin dimers then assemble into dimeric head-to-tail polymers. Ultimately, two head-to-tail polymers assemble laterally into a protofilament with a uniformly shaped rod of 3.5 nm in diameter. Phosphorylation plays a key role in lamin organization, subcellular localization and nuclear envelope disintegration. Phosphorylation by CDK1 at Ser-16 at the onset of mitosis drives lamin disassembly and nuclear envelope breakdown.

Its subcellular location is the nucleus lamina. The protein localises to the nucleus envelope. It localises to the nucleus. The protein resides in the nucleoplasm. It is found in the nucleus matrix. Functionally, lamins are intermediate filament proteins that assemble into a filamentous meshwork, and which constitute the major components of the nuclear lamina, a fibrous layer on the nucleoplasmic side of the inner nuclear membrane. Lamins provide a framework for the nuclear envelope, bridging the nuclear envelope and chromatin. Plays an important role in nuclear assembly, chromatin organization, nuclear membrane and telomere dynamics. This Gallus gallus (Chicken) protein is Lamin-B2 (LMNB2).